The chain runs to 98 residues: Large ribosomal subunit protein uL23 (98 aa).

It belongs to the universal ribosomal protein uL23 family. In terms of assembly, part of the 50S ribosomal subunit. Contacts protein L29, and trigger factor when it is bound to the ribosome.

One of the early assembly proteins it binds 23S rRNA. One of the proteins that surrounds the polypeptide exit tunnel on the outside of the ribosome. Forms the main docking site for trigger factor binding to the ribosome. This is Large ribosomal subunit protein uL23 from Maricaulis maris (strain MCS10) (Caulobacter maris).